A 108-amino-acid chain; its full sequence is Nucleoid-associated protein Bcen_6253 (108 aa).

Residues 85–95 (ATSQEKMSGMT) are compositionally biased toward polar residues. The interval 85 to 108 (ATSQEKMSGMTSGLPLPPGFKLPF) is disordered. The segment covering 99–108 (PLPPGFKLPF) has biased composition (pro residues).

Belongs to the YbaB/EbfC family. Homodimer.

It localises to the cytoplasm. Its subcellular location is the nucleoid. Its function is as follows. Binds to DNA and alters its conformation. May be involved in regulation of gene expression, nucleoid organization and DNA protection. The sequence is that of Nucleoid-associated protein Bcen_6253 from Burkholderia orbicola (strain AU 1054).